A 113-amino-acid chain; its full sequence is uncharacterized protein (113 aa).

This is an uncharacterized protein from Listeria innocua serovar 6a (strain ATCC BAA-680 / CLIP 11262).